A 542-amino-acid chain; its full sequence is MSTSPFNSRVAPMPHDDATAPVLHYAHDAAGAHDAADAAGAHDAADAAGTPPCAASRTARLRSLDAAHVWHPFTQMRDWMGSEPCIIDAADGNHLIDTDGNRYLDGVSSLWTNVHGHRHPHIDEAIRRQLDRVAHSTLLGLGGTPSIELAARLTAIAPAGLTRVFYSDSGSTAVEAALKIAFQYHRQAPEGDARRTRVMAFSNAYHGDTIGSVSLGGMSLFHGIYGPLLFDPVRAPAPHCYRCPADLRPETCGMACLGEVERLMRHHGHELCAVVVEPLVQGAAGMLVQPRGWLRGLRDLCDRHGVFMVADEVAVGFGKTGTMFACEQEGVVPDMLCLAKGITGGYLPLAATLVTEHIHDGFLGGYADFRTFFHGHTYTGNALACAAALASLDVFEEERTLETLRPRIERLATLLAPLNDLPHVGDIRRVGVMTGIELVADRETRTPYRPEERIGHRVTLEARRRGVIVRPLGDVMVLMPPLSITETELETLVHTVRGAIIAVTEHGADGGLWTKRPDGPDNPDKANTPDTPDGARTGETVV.

170–171 (GS) provides a ligand contact to pyridoxal 5'-phosphate. Tyrosine 205 contributes to the substrate binding site. Aspartate 311 is a binding site for pyridoxal 5'-phosphate. 3 residues coordinate substrate: lysine 340, glycine 375, and arginine 470. An N6-(pyridoxal phosphate)lysine modification is found at lysine 340. The tract at residues 509–542 (DGGLWTKRPDGPDNPDKANTPDTPDGARTGETVV) is disordered. Positions 515-524 (KRPDGPDNPD) are enriched in basic and acidic residues.

The protein belongs to the class-III pyridoxal-phosphate-dependent aminotransferase family. BioA subfamily. In terms of assembly, homodimer. Requires pyridoxal 5'-phosphate as cofactor.

It localises to the cytoplasm. It catalyses the reaction (8S)-8-amino-7-oxononanoate + S-adenosyl-L-methionine = S-adenosyl-4-methylsulfanyl-2-oxobutanoate + (7R,8S)-7,8-diammoniononanoate. Its pathway is cofactor biosynthesis; biotin biosynthesis; 7,8-diaminononanoate from 8-amino-7-oxononanoate (SAM route): step 1/1. Catalyzes the transfer of the alpha-amino group from S-adenosyl-L-methionine (SAM) to 7-keto-8-aminopelargonic acid (KAPA) to form 7,8-diaminopelargonic acid (DAPA). It is the only aminotransferase known to utilize SAM as an amino donor. The sequence is that of Adenosylmethionine-8-amino-7-oxononanoate aminotransferase from Nitratidesulfovibrio vulgaris (strain ATCC 29579 / DSM 644 / CCUG 34227 / NCIMB 8303 / VKM B-1760 / Hildenborough) (Desulfovibrio vulgaris).